The primary structure comprises 327 residues: Fructose-1,6-bisphosphatase class 1 (327 aa).

Mg(2+) contacts are provided by E84, D103, L105, and D106. Substrate contacts are provided by residues 106–109, N198, and K264; that span reads DGSS. Residue E270 participates in Mg(2+) binding.

Belongs to the FBPase class 1 family. Homotetramer. It depends on Mg(2+) as a cofactor.

It is found in the cytoplasm. The enzyme catalyses beta-D-fructose 1,6-bisphosphate + H2O = beta-D-fructose 6-phosphate + phosphate. It functions in the pathway carbohydrate biosynthesis; gluconeogenesis. The polypeptide is Fructose-1,6-bisphosphatase class 1 (Psychrobacter cryohalolentis (strain ATCC BAA-1226 / DSM 17306 / VKM B-2378 / K5)).